The following is an 870-amino-acid chain: Aldehyde-alcohol dehydrogenase 2 (870 aa).

Residue cysteine 252 is part of the active site. Glycine 431–glycine 436 lines the NAD(+) pocket.

It in the N-terminal section; belongs to the aldehyde dehydrogenase family. In the C-terminal section; belongs to the iron-containing alcohol dehydrogenase family. As to quaternary structure, seems to form a rod shaped homomer composed of at least 20 identical subunits. It depends on Zn(2+) as a cofactor. Requires Fe(2+) as cofactor.

The enzyme catalyses a primary alcohol + NAD(+) = an aldehyde + NADH + H(+). It carries out the reaction a secondary alcohol + NAD(+) = a ketone + NADH + H(+). It catalyses the reaction acetaldehyde + NAD(+) + CoA = acetyl-CoA + NADH + H(+). In terms of biological role, this enzyme has two NAD(+)-dependent activities: ADH and ACDH. May be a critical enzyme in the fermentative pathway. The chain is Aldehyde-alcohol dehydrogenase 2 (ADH2) from Entamoeba histolytica (strain ATCC 30459 / HM-1:IMSS / ABRM).